Consider the following 379-residue polypeptide: Zinc finger protein 883 (379 aa).

C2H2-type zinc fingers lie at residues 13–35, 41–63, 69–91, 97–119, 125–147, 153–175, 181–203, 209–231, 237–259, 265–287, 293–315, 321–343, and 349–371; these read YLCT…QKTH, YECK…QRIH, YECN…QRVH, YECN…ERIH, YPCN…HRIH, YECT…QGIH, YQCK…QRTH, YECN…QRIH, YECN…QRTH, YVCK…LKIH, YQCN…QRTH, YQCN…KRIH, and YQCT…QKTH.

Belongs to the krueppel C2H2-type zinc-finger protein family.

The protein resides in the nucleus. In terms of biological role, may be involved in transcriptional regulation. This Homo sapiens (Human) protein is Zinc finger protein 883 (ZNF883).